The following is a 268-amino-acid chain: Nickel import ATP-binding protein NikE (268 aa).

The ABC transporter domain occupies 4-252 (LNVSDLSHHY…SSDAGRVLQN (249 aa)). Position 45–52 (45–52 (GRSGCGKS)) interacts with ATP.

It belongs to the ABC transporter superfamily. Nickel importer (TC 3.A.1.5.3) family. In terms of assembly, the complex is composed of two ATP-binding proteins (NikD and NikE), two transmembrane proteins (NikB and NikC) and a solute-binding protein (NikA).

It localises to the cell inner membrane. It catalyses the reaction Ni(2+)(out) + ATP + H2O = Ni(2+)(in) + ADP + phosphate + H(+). Its function is as follows. Part of the ABC transporter complex NikABCDE involved in nickel import. Responsible for energy coupling to the transport system. The polypeptide is Nickel import ATP-binding protein NikE (Shigella dysenteriae serotype 1 (strain Sd197)).